The following is a 90-amino-acid chain: Small ribosomal subunit protein uS15c (90 aa).

As to quaternary structure, component of the chloroplast small ribosomal subunit (SSU). Mature 70S chloroplast ribosomes of higher plants consist of a small (30S) and a large (50S) subunit. The 30S small subunit contains 1 molecule of ribosomal RNA (16S rRNA) and 24 different proteins. The 50S large subunit contains 3 rRNA molecules (23S, 5S and 4.5S rRNA) and 33 different proteins.

Its subcellular location is the plastid. It is found in the chloroplast. In terms of biological role, component of the chloroplast ribosome (chloro-ribosome), a dedicated translation machinery responsible for the synthesis of chloroplast genome-encoded proteins, including proteins of the transcription and translation machinery and components of the photosynthetic apparatus. This Spinacia oleracea (Spinach) protein is Small ribosomal subunit protein uS15c (rps15).